Consider the following 385-residue polypeptide: Sensor histidine kinase Hik2 (385 aa).

Residues 11–131 enclose the GAF domain; sequence ALCRTQLELV…QQVAQTLAIA (121 aa). Cys-13 contacts [3Fe-4S] cluster. Positions 142–270 are DHp domain, may sense NaCl; it reads SHSPAQPLDQ…PQLPPIWLEE (129 aa). The region spanning 158-381 is the Histidine kinase domain; it reads DLLHQLRNPV…AFTLAIPWQM (224 aa). At His-161 the chain carries Phosphohistidine; by autocatalysis.

This sequence belongs to the chloroplast sensor kinase protein family. Hexamers; upon treatment with 0.5 M NaCl only tetramers are seen. The tetramers are probably inactive. [3Fe-4S] cluster serves as cofactor. In terms of processing, autophosphorylates, possibly on His-161.

The enzyme catalyses ATP + protein L-histidine = ADP + protein N-phospho-L-histidine.. Member of 2 two-component regulatory system(s) Hik2/Rre1 and Hik2/RppA. Transduces PQ (plastoquinone) redox signals to photosystem gene expression machinery during the adjustment of photosystem stoichiometry. Reduced PQ suppresses its autophosphorylation activity (i.e. kinase activity is higher under oxidizing conditions). As part of a two-component regulatory system with Rre1, controls expression of sigB and several other genes in response to hyperosmotic stress. May transfer phosphate to RppA in a possible Hik2/RppA two-component system. This chain is Sensor histidine kinase Hik2, found in Thermosynechococcus vestitus (strain NIES-2133 / IAM M-273 / BP-1).